We begin with the raw amino-acid sequence, 188 residues long: Ion-translocating oxidoreductase complex subunit G (188 aa).

At 1–9 (MSDSKEITK) the chain is on the cytoplasmic side. The chain crosses the membrane as a helical span at residues 10–30 (VIVTMVVISAVAAALLALTYT). The Extracellular segment spans residues 31–188 (PTQAQLKLLQ…AVDYVSAQEG (158 aa)). Thr166 carries the post-translational modification FMN phosphoryl threonine.

Belongs to the RnfG family. In terms of assembly, the Rnf complex is probably composed of eight subunits, including RnfA, RnfB, RnfC, RnfD, RnfE and RnfG. The cofactor is FMN.

The protein resides in the cell membrane. Part of a membrane-bound complex that couples electron transfer with translocation of ions across the membrane. Catalyzes Na(+) transport, most probably coupled to electron transfer from reduced ferredoxin to methanophenazine and heterodisulfide reductase. Involved in heterodisulfide reduction during methanogenesis from acetate. The polypeptide is Ion-translocating oxidoreductase complex subunit G (Methanosarcina acetivorans (strain ATCC 35395 / DSM 2834 / JCM 12185 / C2A)).